The chain runs to 352 residues: Ion-translocating oxidoreductase complex subunit D (352 aa).

4 helical membrane-spanning segments follow: residues 20 to 40, 42 to 62, 69 to 91, and 123 to 143; these read IMLL…WFFG, GTLF…AIVL, VASH…SIPP, and PAMI…TSWL. An FMN phosphoryl threonine modification is found at Thr187. 5 consecutive transmembrane segments (helical) span residues 215–235, 242–262, 267–287, 301–321, and 322–342; these read LAGV…VFLL, WHIP…GWLF, LASP…FFIL, LIFG…GGYP, and DGVA…DYYT.

This sequence belongs to the NqrB/RnfD family. In terms of assembly, the complex is composed of six subunits: RsxA, RsxB, RsxC, RsxD, RsxE and RsxG. Requires FMN as cofactor.

The protein localises to the cell inner membrane. Part of a membrane-bound complex that couples electron transfer with translocation of ions across the membrane. Required to maintain the reduced state of SoxR. The polypeptide is Ion-translocating oxidoreductase complex subunit D (Salmonella typhi).